A 278-amino-acid polypeptide reads, in one-letter code: Large ribosomal subunit protein uL2 (278 aa).

The disordered stretch occupies residues 223–278; that stretch reads RGSAMNPNDHPHGGGEGKAPVGRKAPMTPWGKKALGVKTRNKKKASTKLIVRRRTK. A compositionally biased stretch (basic residues) spans 261-278; the sequence is TRNKKKASTKLIVRRRTK.

The protein belongs to the universal ribosomal protein uL2 family. Part of the 50S ribosomal subunit. Forms a bridge to the 30S subunit in the 70S ribosome.

Its function is as follows. One of the primary rRNA binding proteins. Required for association of the 30S and 50S subunits to form the 70S ribosome, for tRNA binding and peptide bond formation. It has been suggested to have peptidyltransferase activity; this is somewhat controversial. Makes several contacts with the 16S rRNA in the 70S ribosome. This chain is Large ribosomal subunit protein uL2, found in Spiroplasma kunkelii.